We begin with the raw amino-acid sequence, 295 residues long: Phosphoribosylaminoimidazole-succinocarboxamide synthase (295 aa).

The protein belongs to the SAICAR synthetase family.

The enzyme catalyses 5-amino-1-(5-phospho-D-ribosyl)imidazole-4-carboxylate + L-aspartate + ATP = (2S)-2-[5-amino-1-(5-phospho-beta-D-ribosyl)imidazole-4-carboxamido]succinate + ADP + phosphate + 2 H(+). The protein operates within purine metabolism; IMP biosynthesis via de novo pathway; 5-amino-1-(5-phospho-D-ribosyl)imidazole-4-carboxamide from 5-amino-1-(5-phospho-D-ribosyl)imidazole-4-carboxylate: step 1/2. This Corynebacterium ammoniagenes (Brevibacterium ammoniagenes) protein is Phosphoribosylaminoimidazole-succinocarboxamide synthase.